A 205-amino-acid polypeptide reads, in one-letter code: Holliday junction branch migration complex subunit RuvA (205 aa).

Residues 1 to 64 form a domain I region; sequence MIGKLKGTID…EDQLKLFGFL (64 aa). The interval 65–143 is domain II; the sequence is SALEREWFRL…AFVGEMAPSI (79 aa). The interval 144 to 153 is flexible linker; sequence GLKQELGEGV. Residues 153–205 form a domain III region; sequence VAAAPVSDAVSALTNLGYSRDQAANAVAAALKNGGEGADSARLIRLGLKELSR.

It belongs to the RuvA family. As to quaternary structure, homotetramer. Forms an RuvA(8)-RuvB(12)-Holliday junction (HJ) complex. HJ DNA is sandwiched between 2 RuvA tetramers; dsDNA enters through RuvA and exits via RuvB. An RuvB hexamer assembles on each DNA strand where it exits the tetramer. Each RuvB hexamer is contacted by two RuvA subunits (via domain III) on 2 adjacent RuvB subunits; this complex drives branch migration. In the full resolvosome a probable DNA-RuvA(4)-RuvB(12)-RuvC(2) complex forms which resolves the HJ.

The protein resides in the cytoplasm. Its function is as follows. The RuvA-RuvB-RuvC complex processes Holliday junction (HJ) DNA during genetic recombination and DNA repair, while the RuvA-RuvB complex plays an important role in the rescue of blocked DNA replication forks via replication fork reversal (RFR). RuvA specifically binds to HJ cruciform DNA, conferring on it an open structure. The RuvB hexamer acts as an ATP-dependent pump, pulling dsDNA into and through the RuvAB complex. HJ branch migration allows RuvC to scan DNA until it finds its consensus sequence, where it cleaves and resolves the cruciform DNA. This is Holliday junction branch migration complex subunit RuvA from Sinorhizobium medicae (strain WSM419) (Ensifer medicae).